A 633-amino-acid polypeptide reads, in one-letter code: MVLQKRLDYGSHGHRAPIKPRVATLAPVKRSTRIRKKQMYALDLLATAAEKLLADQDNLSSGPNINETPEGYVTSMKPVKAEQFDEAFPLRSVAVKKDDCKGCTVGCAGICGFLRQANMCLAENSSTQNLADSVLESLTAKPDVLAKDSFVSSKKSCRLGFGLGTIPEYGSVGVCQPWSTRSAEVKQVHRARPTAIRSQEDSDAAALCALVETMDLDTKPLAEASSGSNSGVHICGPDRGHNSHPSCLAKVQHAADRDDDENSSGCVHPSTSGNNRGYIPHYIGDRRIRRLFASRLRKAARNRICGEMSCKGNKLSLCEKKMPTTRRRVQQTTLKRKRLAQLYSEKSSDEVKLTIKSFNIPELLIEIPENATVGSLKKTVSDAVTTIIERGLRVGILLQGKNIQNDNKTLRQAGICRGKKLNDIGFTLECEAGQDSHPGVIVPEEMDFVGASVVDKSATVKCEEPAENQQLMQDFPGCSLSDPGSVDYPVEWSTQETSASSQAIVPFADPNSLALANVPLSRSKRPDFGQRRIRRPFTVAEVELLVEAVEHLGTGRWRDVKFRAFENVHHRTYVDLKDKWKTLVHTASIAPQQRRGAPVPQELLDRVLAAQAYWSEQQAKLHGDPPVPEICPT.

The interval 253–272 (HAADRDDDENSSGCVHPSTS) is disordered. The segment covering 263–272 (SSGCVHPSTS) has biased composition (polar residues). Residues 351–430 (VKLTIKSFNI…LNDIGFTLEC (80 aa)) form the Ubiquitin-like domain. The segment at 506 to 615 (PFADPNSLAL…RVLAAQAYWS (110 aa)) is sufficient for telomeric DNA binding. The HTH myb-type domain maps to 529–588 (GQRRIRRPFTVAEVELLVEAVEHLGTGRWRDVKFRAFENVHHRTYVDLKDKWKTLVHTAS). Positions 534-584 (RRPFTVAEVELLVEAVEHLGTGRWRDVKFRAFENVHHRTYVDLKDKWKTLV) constitute an SANT domain. Residues 557–584 (WRDVKFRAFENVHHRTYVDLKDKWKTLV) constitute a DNA-binding region (H-T-H motif).

As to quaternary structure, homodimer. Ubiquitous.

It is found in the chromosome. It localises to the telomere. Binds the telomeric double-stranded 5'TTTAGGG-3' repeat and regulates telomere length and structure. This is Telomere-binding protein 1 (TBP1) from Oryza sativa subsp. japonica (Rice).